The chain runs to 443 residues: Nuclear distribution protein nudF (443 aa).

The LisH domain occupies 9-41 (QAEELHKSIIAYLSSINASRSCEVLREELQVDS). Positions 60–87 (TGIARLQKKILDLESKLAGLQTELDTIS) form a coiled coil. WD repeat units lie at residues 111-152 (SHRD…RTLK), 154-194 (HMRP…ANVR), 198-238 (GHDH…CVKV), 241-280 (SQGS…SVAS), 283-343 (GHEN…IKTL), 345-384 (GHDN…RLVK), 388-427 (AHGH…PGFQ), and 429-443 (VIAT…RIFT).

This sequence belongs to the WD repeat LIS1/nudF family. As to quaternary structure, self-associates. Interacts with nudE and dynein.

The protein localises to the cytoplasm. Its subcellular location is the cytoskeleton. It localises to the spindle pole. Its function is as follows. Positively regulates the activity of the minus-end directed microtubule motor protein dynein. May enhance dynein-mediated microtubule sliding by targeting dynein to the microtubule plus end. Required for nuclear migration during vegetative growth as well as development. Required for retrograde early endosome (EE) transport from the hyphal tip. Required for localization of dynein to the mitotic spindle poles. Recruits additional proteins to the dynein complex at SPBs. The protein is Nuclear distribution protein nudF of Aspergillus niger (strain ATCC MYA-4892 / CBS 513.88 / FGSC A1513).